A 334-amino-acid polypeptide reads, in one-letter code: Phosphate acyltransferase (334 aa).

Belongs to the PlsX family. In terms of assembly, homodimer. Probably interacts with PlsY.

The protein resides in the cytoplasm. The catalysed reaction is a fatty acyl-[ACP] + phosphate = an acyl phosphate + holo-[ACP]. Its pathway is lipid metabolism; phospholipid metabolism. Its function is as follows. Catalyzes the reversible formation of acyl-phosphate (acyl-PO(4)) from acyl-[acyl-carrier-protein] (acyl-ACP). This enzyme utilizes acyl-ACP as fatty acyl donor, but not acyl-CoA. This chain is Phosphate acyltransferase, found in Mycoplasmopsis agalactiae (strain NCTC 10123 / CIP 59.7 / PG2) (Mycoplasma agalactiae).